A 168-amino-acid polypeptide reads, in one-letter code: MPRSRINGNFIDQTFSIVANILLRVIPTTSGEKEAFTYYRDGMSAQSEGNYAEALQNYYEAMRLEIDPYDRSYILYNIGLIHTSNGEHTKALEYYFRALERNPFLPQAFNNMAVICHYRGEQAIQQGDSEIAEAWFDQAAEYWKQAIALTPGNYIEAHNWLKITRRFE.

TPR repeat units follow at residues 35 to 68 (AFTYYRDGMSAQSEGNYAEALQNYYEAMRLEIDP), 72 to 105 (SYILYNIGLIHTSNGEHTKALEYYFRALERNPFL), and 120 to 153 (GEQAIQQGDSEIAEAWFDQAAEYWKQAIALTPGN).

Belongs to the Ycf3 family.

It localises to the plastid. The protein localises to the chloroplast thylakoid membrane. Its function is as follows. Essential for the assembly of the photosystem I (PSI) complex. May act as a chaperone-like factor to guide the assembly of the PSI subunits. This chain is Photosystem I assembly protein Ycf3, found in Atropa belladonna (Belladonna).